The sequence spans 69 residues: Large ribosomal subunit protein bL31 (69 aa).

Zn(2+)-binding residues include cysteine 17, cysteine 19, cysteine 37, and cysteine 40.

The protein belongs to the bacterial ribosomal protein bL31 family. Type A subfamily. As to quaternary structure, part of the 50S ribosomal subunit. Zn(2+) serves as cofactor.

Binds the 23S rRNA. The chain is Large ribosomal subunit protein bL31 from Thermoanaerobacter pseudethanolicus (strain ATCC 33223 / 39E) (Clostridium thermohydrosulfuricum).